The chain runs to 816 residues: MAMWQGAMDNRGFQQGSFSSFQNSSSDEDLMDIPATAMDFSMRDDVPPLDREVGEDKSYNGGGIGSSNRIMDFLEEPIPGVGTYDDFNTIDWVREKSRDRDRHREITNKSKESTWALIHSVSDAFSGWLLMLLIGLLSGSLAGLIDISAHWMTDLKEGICTGGFWFNHEHCCWNSEHVTFEERDKCPEWNSWSQLIISTDEGAFAYIVNYFMYVLWALLFAFLAVSLVKVFAPYACGSGIPEIKTILSGFIIRGYLGKWTLVIKTITLVLAVSSGLSLGKEGPLVHVACCCGNILCHCFNKYRKNEAKRREVLSAAAAAGVSVAFGAPIGGVLFSLEEVSYYFPLKTLWRSFFAALVAAFTLRSINPFGNSRLVLFYVEFHTPWHLFELVPFILLGIFGGLWGALFIRTNIAWCRKRKTTQLGKYPVIEVLVVTAITAILAFPNEYTRMSTSELISELFNDCGLLDSSKLCDYENRFNTSKGGELPDRPAGVGVYSAMWQLALTLILKIVITIFTFGMKIPSGLFIPSMAVGAIAGRLLGVGMEQLAYYHQEWTVFNSWCSQGADCITPGLYAMVGAAACLGGVTRMTVSLVVIMFELTGGLEYIVPLMAAAMTSKWVADALGREGIYDAHIRLNGYPFLEAKEEFAHKTLAMDVMKPRRNDPLLTVLTQDSMTVEDVETIISETTYSGFPVVVSRESQRLVGFVLRRDLIISIENARKKQDGVVSTSIIYFTEHSPPLPPYTPPTLKLRNILDLSPFTVTDLTPMEIVVDIFRKLGLRQCLVTHNGRLLGIITKKDVLKHIAQMANQDPDSILFN.

Positions 1-26 are disordered; that stretch reads MAMWQGAMDNRGFQQGSFSSFQNSSS. Topologically, residues 1–124 are cytoplasmic; sequence MAMWQGAMDN…WALIHSVSDA (124 aa). Over residues 12–25 the composition is skewed to low complexity; that stretch reads GFQQGSFSSFQNSS. Transmembrane regions (helical) follow at residues 125–162 and 208–231; these read FSGW…ICTG and VNYF…VKVF. A Selectivity filter part_1 motif is present at residues 237–241; it reads GSGIP. Serine 238 is a chloride binding site. Residues 240–247 constitute an intramembrane region (helical); the sequence is IPEIKTIL. The next 2 membrane-spanning stretches (helical) occupy residues 256–275 and 281–300; these read LGKW…VSSG and EGPL…HCFN. Residues 279–283 carry the Selectivity filter part_2 motif; that stretch reads GKEGP. 2 consecutive intramembrane regions (helical) follow at residues 312 to 324 and 328 to 336; these read VLSA…VSVA and PIGGVLFSL. 5 helical membrane passes run 348–366, 389–415, 422–442, 498–518, and 523–542; these read LWRS…RSIN, LVPF…AWCR, LGKY…ILAF, MWQL…TFGM, and GLFI…LGVG. The Selectivity filter part_3 motif lies at 523–527; that stretch reads GLFIP. A chloride-binding site is contributed by phenylalanine 525. Positions 570–584 form an intramembrane region, helical; sequence GLYAMVGAAACLGGV. The segment at residues 585-587 is an intramembrane region (note=Loop between two helices); that stretch reads TRM. Positions 588–599 form an intramembrane region, helical; sequence TVSLVVIMFELT. Positions 600–604 form an intramembrane region, note=Loop between two helices; the sequence is GGLEY. The chain crosses the membrane as a helical span at residues 605 to 622; that stretch reads IVPLMAAAMTSKWVADAL. Topologically, residues 623–816 are cytoplasmic; the sequence is GREGIYDAHI…NQDPDSILFN (194 aa). Residue tyrosine 628 coordinates chloride. CBS domains are found at residues 656 to 720 and 752 to 812; these read MKPR…ARKK and ILDL…DPDS. Residues threonine 666, 687-689, and 794-797 contribute to the ATP site; these read YSG and TKKD.

This sequence belongs to the chloride channel (TC 2.A.49) family. ClC-5/CLCN5 subfamily. Interacts with NEDD4 and NEDD4L. Post-translationally, ubiquitinated by NEDD4L in the presence of albumin; which promotes endocytosis and proteasomal degradation. In terms of tissue distribution, kidney. Moderately expressed in aortic vascular smooth muscle and endothelial cells, and at a slightly higher level in the coronary vascular smooth muscle.

It is found in the golgi apparatus membrane. Its subcellular location is the endosome membrane. The protein resides in the cell membrane. The enzyme catalyses 2 chloride(in) + H(+)(out) = 2 chloride(out) + H(+)(in). Its function is as follows. Proton-coupled chloride transporter. Functions as antiport system and exchanges chloride ions against protons. Important for normal acidification of the endosome lumen. May play an important role in renal tubular function. The CLC channel family contains both chloride channels and proton-coupled anion transporters that exchange chloride or another anion for protons. The absence of conserved gating glutamate residues is typical for family members that function as channels. The protein is H(+)/Cl(-) exchange transporter 5 of Homo sapiens (Human).